A 398-amino-acid polypeptide reads, in one-letter code: Carbamoyl phosphate synthase large chain (398 aa).

The 187-residue stretch at 1 to 187 (KLGVPQPEGG…LAKIAAKVIV (187 aa)) folds into the ATP-grasp domain. The segment at 1–255 (KLGVPQPEGG…YKAELAADNV (255 aa)) is carbamoyl phosphate synthetic domain. ATP contacts are provided by arginine 32, aspartate 71, leucine 73, glutamate 78, glycine 103, valine 104, histidine 105, serine 106, glutamine 146, and glutamate 158. Mg(2+) is bound by residues glutamine 146, glutamate 158, and asparagine 160. Glutamine 146, glutamate 158, and asparagine 160 together coordinate Mn(2+). Residues 254–395 (NVLPLTGKVF…NEYHKEMEEE (142 aa)) enclose the MGS-like domain. The tract at residues 256 to 398 (LPLTGKVFLS…HKEMEEENKV (143 aa)) is allosteric domain.

Belongs to the CarB family. Composed of two chains; the small (or glutamine) chain promotes the hydrolysis of glutamine to ammonia, which is used by the large (or ammonia) chain to synthesize carbamoyl phosphate. Tetramer of heterodimers (alpha,beta)4. Requires Mg(2+) as cofactor. Mn(2+) is required as a cofactor.

It carries out the reaction hydrogencarbonate + L-glutamine + 2 ATP + H2O = carbamoyl phosphate + L-glutamate + 2 ADP + phosphate + 2 H(+). The enzyme catalyses hydrogencarbonate + NH4(+) + 2 ATP = carbamoyl phosphate + 2 ADP + phosphate + 2 H(+). It participates in amino-acid biosynthesis; L-arginine biosynthesis; carbamoyl phosphate from bicarbonate: step 1/1. It functions in the pathway pyrimidine metabolism; UMP biosynthesis via de novo pathway; (S)-dihydroorotate from bicarbonate: step 1/3. Large subunit of the glutamine-dependent carbamoyl phosphate synthetase (CPSase). CPSase catalyzes the formation of carbamoyl phosphate from the ammonia moiety of glutamine, carbonate, and phosphate donated by ATP, constituting the first step of 2 biosynthetic pathways, one leading to arginine and/or urea and the other to pyrimidine nucleotides. The large subunit (synthetase) binds the substrates ammonia (free or transferred from glutamine from the small subunit), hydrogencarbonate and ATP and carries out an ATP-coupled ligase reaction, activating hydrogencarbonate by forming carboxy phosphate which reacts with ammonia to form carbamoyl phosphate. This is Carbamoyl phosphate synthase large chain from Methanosarcina barkeri.